Consider the following 237-residue polypeptide: CDP-diacylglycerol--serine O-phosphatidyltransferase (237 aa).

The next 8 helical transmembrane spans lie at 3-23, 25-45, 73-93, 95-115, 124-144, 150-170, 184-204, and 207-227; these read INPL…LGMM, IFYA…ASLI, VVAF…YNFG, IGMA…ARFN, YSFI…CVLL, FLEG…GVLM, WNLK…VRPL, and LSVF…FLMV.

This sequence belongs to the CDP-alcohol phosphatidyltransferase class-I family.

The protein resides in the cell membrane. It catalyses the reaction a CDP-1,2-diacyl-sn-glycerol + L-serine = a 1,2-diacyl-sn-glycero-3-phospho-L-serine + CMP + H(+). The polypeptide is CDP-diacylglycerol--serine O-phosphatidyltransferase (pssA) (Helicobacter pylori (strain J99 / ATCC 700824) (Campylobacter pylori J99)).